We begin with the raw amino-acid sequence, 359 residues long: uncharacterized protein (359 aa).

Positions 1–17 are cleaved as a signal peptide; sequence MLGRSLTSVLIVPTGIG. C18 carries N-palmitoyl cysteine lipidation. The S-diacylglycerol cysteine moiety is linked to residue C18.

The protein localises to the cell membrane. This is an uncharacterized protein from Synechococcus sp. (strain ATCC 27144 / PCC 6301 / SAUG 1402/1) (Anacystis nidulans).